We begin with the raw amino-acid sequence, 362 residues long: MATAVSAAVSLPSSKSTSFSSRTSIISTDKINFNKVPLYYRNVSGGSRLVSIRAQVTTEAPAKVEKISKKQDEGVIVNKFRPKEPYVGRCLLNTKITGDDAPGETWHMVFSTEGEVPYREGQSIGVIADGVDANGKPHKLRLYSTASSALGDFGDSKTVSLCVKRLVYTNDKGEEVKGVCSNFLCDLKPGAEVKITGPVGKEMLMPKDPNATVIMLATGTGIAPFRSFLWKMFFEKHEDYKFNGTAWLFLGVPTSSSLLYKEEFEKMKEKAPENFRLDFAVSREQTNEKGEKMYIQTRMAQYAEELWTLLQKDNTFIYMCGLKGMEQGIDEIMSALAERDGIVWADYKKQLKKAEQWNVEVY.

The tract at residues 1-20 (MATAVSAAVSLPSSKSTSFS) is disordered. The transit peptide at 1-62 (MATAVSAAVS…RAQVTTEAPA (62 aa)) directs the protein to the chloroplast. Low complexity predominate over residues 10–20 (SLPSSKSTSFS). The region spanning 83–205 (KEPYVGRCLL…TGPVGKEMLM (123 aa)) is the FAD-binding FR-type domain. FAD is bound by residues 141–144 (RLYS), 162–164 (CVK), Y168, 179–181 (VCS), and T220. Residues S144 and K164 each coordinate NADP(+). Residues T220, 252-253 (VP), 282-283 (SR), K292, 321-322 (GL), and E360 contribute to the NADP(+) site.

Belongs to the ferredoxin--NADP reductase type 1 family. Requires FAD as cofactor.

The protein localises to the plastid. Its subcellular location is the chloroplast stroma. The protein resides in the chloroplast thylakoid membrane. The catalysed reaction is 2 reduced [2Fe-2S]-[ferredoxin] + NADP(+) + H(+) = 2 oxidized [2Fe-2S]-[ferredoxin] + NADPH. The protein operates within energy metabolism; photosynthesis. Functionally, may play a key role in regulating the relative amounts of cyclic and non-cyclic electron flow to meet the demands of the plant for ATP and reducing power. This chain is Ferredoxin--NADP reductase, leaf-type isozyme, chloroplastic (PETH), found in Nicotiana tabacum (Common tobacco).